A 334-amino-acid chain; its full sequence is FAD:protein FMN transferase (334 aa).

Positions 1–16 are cleaved as a signal peptide; that stretch reads MRNWLVALASLLLLAG. Cysteine 17 is lipidated: N-palmitoyl cysteine. Cysteine 17 carries the S-diacylglycerol cysteine lipid modification. FAD-binding positions include methionine 31, tyrosine 69, 110–112, and aspartate 168; that span reads ALD. Threonine 171 serves as a coordination point for Mg(2+). FAD is bound by residues lysine 174 and isoleucine 259. Mg(2+) is bound by residues aspartate 285 and threonine 289.

It belongs to the ApbE family. It depends on Mg(2+) as a cofactor.

Its subcellular location is the cell inner membrane. It catalyses the reaction L-threonyl-[protein] + FAD = FMN-L-threonyl-[protein] + AMP + H(+). Flavin transferase that catalyzes the transfer of the FMN moiety of FAD and its covalent binding to the hydroxyl group of a threonine residue in a target flavoprotein such as NqrB and NqrC, two subunits of the NQR complex. Cannot use directly FMN instead of FAD as substrate. The polypeptide is FAD:protein FMN transferase (Vibrio cholerae serotype O1 (strain ATCC 39541 / Classical Ogawa 395 / O395)).